The following is a 402-amino-acid chain: Phosphoglycerate kinase (402 aa).

Residues 21–23 (DFN), arginine 36, 59–62 (HLGR), arginine 118, and arginine 151 each bind substrate. ATP contacts are provided by residues lysine 201, glycine 293, glutamate 324, and 353-356 (GGDS).

The protein belongs to the phosphoglycerate kinase family. As to quaternary structure, monomer.

It localises to the cytoplasm. It carries out the reaction (2R)-3-phosphoglycerate + ATP = (2R)-3-phospho-glyceroyl phosphate + ADP. Its pathway is carbohydrate degradation; glycolysis; pyruvate from D-glyceraldehyde 3-phosphate: step 2/5. This is Phosphoglycerate kinase from Thermosipho africanus (strain TCF52B).